The primary structure comprises 386 residues: Coproporphyrinogen-III oxidase 1, chloroplastic (386 aa).

A chloroplast-targeting transit peptide spans 1 to 48 (MASHSSTLLSSPTFAPFSSHRLHYSPNPSTLRFSRPIRNKPNLALRCS). The segment at 125-134 (VLQDGNVFEK) is important for dimerization. Position 174 (Ser-174) interacts with substrate. His-188 functions as the Proton donor in the catalytic mechanism. Substrate is bound by residues 190-192 (NYR) and 344-349 (GGRIES). An important for dimerization region spans residues 326 to 361 (YVEFNLVYDRGTTFGLKTGGRIESILVSLPLSARWE).

Belongs to the aerobic coproporphyrinogen-III oxidase family. As to quaternary structure, homodimer. Expressed in cotyledons, leaves and roots.

It is found in the plastid. The protein resides in the chloroplast. It catalyses the reaction coproporphyrinogen III + O2 + 2 H(+) = protoporphyrinogen IX + 2 CO2 + 2 H2O. The protein operates within porphyrin-containing compound metabolism; protoporphyrin-IX biosynthesis; protoporphyrinogen-IX from coproporphyrinogen-III (O2 route): step 1/1. Its pathway is porphyrin-containing compound metabolism; chlorophyll biosynthesis. Its function is as follows. Key enzyme in heme biosynthesis. Catalyzes the oxidative decarboxylation of propionic acid side chains of rings A and B of coproporphyrinogen III. The sequence is that of Coproporphyrinogen-III oxidase 1, chloroplastic (CPX1) from Arabidopsis thaliana (Mouse-ear cress).